A 124-amino-acid polypeptide reads, in one-letter code: MKTNCEFPLLCLLIVLVANVEGEVEDNELKMVKRLWRNWEDPEQRQLLDQEAEQEKQREKRLWRNWEDLELRQLLNEFAENQREKRLWRNWERRQVANEDDGEKPKELWRNWEDLKRRQVGRFE.

Residues 1-22 (MKTNCEFPLLCLLIVLVANVEG) form the signal peptide. The propeptide occupies 23 to 94 (EVEDNELKMV…KRLWRNWERR (72 aa)). RLWRNWE repeat units follow at residues 34 to 40 (RLWRNWE), 61 to 67 (RLWRNWE), and 86 to 92 (RLWRNWE). Glutamine 95 is subject to Pyrrolidone carboxylic acid. The stretch at 107–113 (ELWRNWE) is one RLWRNWE 4; approximate repeat. Residues 112–124 (WEDLKRRQVGRFE) constitute a propeptide that is removed on maturation.

Belongs to the scoloptoxin-08 family. As to expression, expressed by the venom gland.

Its subcellular location is the secreted. The polypeptide is U-scoloptoxin-Er5d (Ethmostigmus rubripes (Giant centipede)).